A 166-amino-acid chain; its full sequence is Lipoprotein signal peptidase (166 aa).

The next 4 membrane-spanning stretches (helical) occupy residues 10–30 (GGALAPWLGISLIVILFDQLT), 32–52 (IAVLKTFAYGAMHALTPFFNL), 71–91 (WQRWAFTALGIGATLVICYLL), and 100–120 (FSLSLALILGGALGNVIDRLI). Catalysis depends on residues Asp-126 and Asp-144. A helical transmembrane segment spans residues 135 to 155 (WHWPAFNLADSAITVGAVLLI).

It belongs to the peptidase A8 family.

Its subcellular location is the cell inner membrane. It catalyses the reaction Release of signal peptides from bacterial membrane prolipoproteins. Hydrolyzes -Xaa-Yaa-Zaa-|-(S,diacylglyceryl)Cys-, in which Xaa is hydrophobic (preferably Leu), and Yaa (Ala or Ser) and Zaa (Gly or Ala) have small, neutral side chains.. The protein operates within protein modification; lipoprotein biosynthesis (signal peptide cleavage). In terms of biological role, this protein specifically catalyzes the removal of signal peptides from prolipoproteins. The polypeptide is Lipoprotein signal peptidase (Burkholderia mallei (strain ATCC 23344)).